Reading from the N-terminus, the 742-residue chain is Two pore calcium channel protein 1 (742 aa).

The disordered stretch occupies residues 1–44 (MSEAQAPLITEEAAERGLASSGSRRLSDGGGGQGSRKYRRRSDA). At 1 to 82 (MSEAQAPLIT…NDTRFGRAMS (82 aa)) the chain is on the cytoplasmic side. A helical membrane pass occupies residues 83-103 (FYFVYLRLDWLWSLNIFALIL). At 104 to 140 (LNFLEKPLWCRKDALHACDQRDMYFLGQLPYFSKTES) the chain is on the extracellular side. Residues 141–161 (LIYEGLTLVILVMEILCPLSY) traverse the membrane as a helical segment. Over 162-176 (EGLNIFWRSTTNKLK) the chain is Cytoplasmic. The helical transmembrane segment at 177–197 (ILLLFILACDILVFAFSSQPF) threads the bilayer. At 198 to 204 (RLAPYIR) the chain is on the extracellular side. A helical; Voltage-sensor transmembrane segment spans residues 205 to 226 (VVFLIMTIRELRMCAITLAGLI). The chain crosses the membrane as a helical span at residues 227–247 (GTYLNVLALSLLFLLFASWLA). Over 248–258 (YVTFEDTPQGK) the chain is Extracellular. An intramembrane region (pore-forming) is located at residues 259 to 273 (TIFSSYGVTLYQMFV). Over 274-296 (LFTTSNNPDVWVPAYKISRWYSL) the chain is Extracellular. Residues 297–317 (FFIVYVLLGVYFLTNLILAVI) traverse the membrane as a helical segment. Residues 318–446 (YDSFKEQFAK…SFVRSRTFEY (129 aa)) are Cytoplasmic-facing. 2 EF-hand domains span residues 335–370 (IRKNILQKAFELIDTNTRGYLDREQCISLLNELNKY) and 376–411 (TSREDFELIFAELDRSGDFKVTSEEFADLCNTIAIK). The helical transmembrane segment at 447-467 (IIVFVLLINLVAVIIETTLDI) threads the bilayer. Topologically, residues 468–480 (ENSSSQETWQEVE) are extracellular. N-linked (GlcNAc...) asparagine glycosylation occurs at Asn469. Residues 481 to 501 (FFLGWIYVAEMALKIFSLGFG) traverse the membrane as a helical segment. Over 502-510 (AYWMEGQNK) the chain is Cytoplasmic. A helical membrane pass occupies residues 511-531 (FDFVLTWTIFIGETLTFAFPS). The Extracellular segment spans residues 532 to 540 (KLPFLSNGE). The helical; Voltage-sensor transmembrane segment at 541–558 (WIRYLLLGRVLRLTRILL) threads the bilayer. At 559-582 (QVQRFRVFVATFFTLMSSLMPYLG) the chain is on the cytoplasmic side. Residues 583–603 (IVFCILCMYCSLGLQIFGGIV) form a helical membrane-spanning segment. Residues 604–627 (YAGNPTLEETDLFSNDYLLFNFND) lie on the Extracellular side of the membrane. An intramembrane region (pore-forming) is located at residues 628 to 642 (YPSGMVTLFNLLVMG). The Extracellular portion of the chain corresponds to 643-663 (NWQVWMESYWQLTGSSWSLIY). The chain crosses the membrane as a helical span at residues 664–684 (FVSFYLISILLLLNLIVAFVL). Residues 685–742 (EAFFAEMELEKGEEVDIQSPTSGGIKKRRSMRVRSKGTMVDILLHHMLSNELDGSQNS) lie on the Cytoplasmic side of the membrane.

Belongs to the calcium channel alpha-1 subunit (TC 1.A.1.11) family. Two pore calcium channel subfamily. As to quaternary structure, homodimer.

It is found in the membrane. With respect to regulation, inhibited by Al(3+). Functions as a voltage-gated inward-rectifying Ca(2+) channel (VDCC) across the plasma membrane that mediates sucrose-induced Ca(2+) influx in autotrophically grown leaf cells. Acts as the major ROS-responsive Ca(2+) channel and is the possible target of Al-dependent inhibition. Plays a regulatory role in defense responses. The sequence is that of Two pore calcium channel protein 1 (TPC1) from Hordeum vulgare (Barley).